The chain runs to 254 residues: Urease accessory protein UreD (254 aa).

The protein belongs to the UreD family. UreD, UreF and UreG form a complex that acts as a GTP-hydrolysis-dependent molecular chaperone, activating the urease apoprotein by helping to assemble the nickel containing metallocenter of UreC. The UreE protein probably delivers the nickel.

It localises to the cytoplasm. Its function is as follows. Required for maturation of urease via the functional incorporation of the urease nickel metallocenter. This chain is Urease accessory protein UreD, found in Streptomyces coelicolor (strain ATCC BAA-471 / A3(2) / M145).